Here is a 65-residue protein sequence, read N- to C-terminus: Large ribosomal subunit protein bL35 (65 aa).

Positions 1 to 28 are disordered; the sequence is MPKLKTRKAAARRFKATGSGKIKRRKAF.

It belongs to the bacterial ribosomal protein bL35 family.

The protein is Large ribosomal subunit protein bL35 of Trichodesmium erythraeum (strain IMS101).